Consider the following 253-residue polypeptide: UPF0246 protein lhv_1883 (253 aa).

Belongs to the UPF0246 family.

This Lactobacillus helveticus (strain DPC 4571) protein is UPF0246 protein lhv_1883.